Reading from the N-terminus, the 108-residue chain is uncharacterized protein (108 aa).

Residues leucine 10–phenylalanine 32 traverse the membrane as a helical segment.

The protein resides in the membrane. This is an uncharacterized protein from Saccharomyces cerevisiae (strain ATCC 204508 / S288c) (Baker's yeast).